A 221-amino-acid chain; its full sequence is Adenylate kinase (221 aa).

G10 to T15 serves as a coordination point for ATP. An NMP region spans residues S30–V59. AMP is bound by residues T31, R36, G57 to V59, G85 to R88, and Q92. Positions G122–D159 are LID. ATP contacts are provided by residues R123 and T132–Y133. 2 residues coordinate AMP: R156 and R167. G207 is a binding site for ATP.

This sequence belongs to the adenylate kinase family. Monomer.

The protein resides in the cytoplasm. It carries out the reaction AMP + ATP = 2 ADP. Its pathway is purine metabolism; AMP biosynthesis via salvage pathway; AMP from ADP: step 1/1. Functionally, catalyzes the reversible transfer of the terminal phosphate group between ATP and AMP. Plays an important role in cellular energy homeostasis and in adenine nucleotide metabolism. This Cupriavidus metallidurans (strain ATCC 43123 / DSM 2839 / NBRC 102507 / CH34) (Ralstonia metallidurans) protein is Adenylate kinase.